The following is a 158-amino-acid chain: Transcription factor BTF3 homolog 4 (158 aa).

Residues 33 to 98 enclose the NAC-A/B domain; the sequence is TADDKKLQSS…AEAKPITEML (66 aa). The tract at residues 124 to 158 is disordered; that stretch reads VLDSKAPKSEDIDEEDDDVPDLAENFDEASKNEAN. The span at 134–150 shows a compositional bias: acidic residues; that stretch reads DIDEEDDDVPDLAENFD.

The protein belongs to the NAC-beta family.

This chain is Transcription factor BTF3 homolog 4 (BTF3L4), found in Gallus gallus (Chicken).